Consider the following 813-residue polypeptide: MNEYNFSDIEKSTQEYWRKNDTFKTIEDNTKEKFYCLSMLPYPSGTLHMGHVRNYTIGDVIARYQKMQGKNVLHPMGWDAFGLPAENAAIKHKKSPYEWTKSNIAYMRSQFDSLGFSFDWSREITTCDEDYYKWEQWFFIQLYKKGLAYRKNSVVNWDPVDQTVLANEQVVDGRGWRSGALVEKKEIPQWFLKITDYADELLQDINKLDNWPEAVKTMQINWIGKSKGLTVKFKVKDSNQEIEVFTTRPDTLMGVNYLGIAPEHPLALKEAKSNSQLAAFIEECKKTSTMEADLATQEKKGFKTSIKVIHPISAETIDVWVANFVLMGYGSGAVMSVPAHDQRDWEFAQKYNIPLKQVIESNDNKLKIDLEKQAFTEKGILINSGEFDGLNFKNAYQAIKKYLTEQNKGYETTNFRIHDWGISRQRYWGCPIPMIHCDDCGAVPEKEENLPVRLPTDVALTEAGSPLKDIPEFINVACPECGKPAKRETDTFDTFFESSWYYARYTCPTANQMLDQEANYWLPVDKYIGGIEHAIMHLLYARFFHKLMRDQGLVKSDEPFKNLLTQGMVLKDGAKMSKSKGNIVDPQELIDKYGADTVRLFSMFAAPPEQSLEWSETGVEGANKFLRKVFNYAELNKVIFAKNITLESQKLTKEDKKARFEIHSNLKQAIFDFDKSQFNTVVSACMKILNTLNNYDNLSESVKVEGFSILLRILAPFTPHLCHYLWQQLNLGEDILHTSFPTVDNNALEKDEFLLVVQINGKLKAKLELDASLSSNQVEEVVLADEHVKSFIDNKQVVKVIYVPQKLINIVIK.

The 'HIGH' region motif lies at Pro41–His51. The short motif at Lys575–Ser579 is the 'KMSKS' region element. Lys578 is an ATP binding site.

It belongs to the class-I aminoacyl-tRNA synthetase family.

The protein localises to the cytoplasm. The enzyme catalyses tRNA(Leu) + L-leucine + ATP = L-leucyl-tRNA(Leu) + AMP + diphosphate. The protein is Leucine--tRNA ligase of Francisella tularensis subsp. tularensis (strain FSC 198).